We begin with the raw amino-acid sequence, 194 residues long: NADH-quinone oxidoreductase subunit B (194 aa).

Residues 1 to 26 are disordered; that stretch reads MGLTPSATKPEIAQAPQGIVDPSTGR. Residues Cys-73, Cys-74, Cys-138, and Cys-168 each coordinate [4Fe-4S] cluster.

It belongs to the complex I 20 kDa subunit family. NDH-1 is composed of 14 different subunits. Subunits NuoB, C, D, E, F, and G constitute the peripheral sector of the complex. Requires [4Fe-4S] cluster as cofactor.

It localises to the cell inner membrane. It carries out the reaction a quinone + NADH + 5 H(+)(in) = a quinol + NAD(+) + 4 H(+)(out). Functionally, NDH-1 shuttles electrons from NADH, via FMN and iron-sulfur (Fe-S) centers, to quinones in the respiratory chain. The immediate electron acceptor for the enzyme in this species is believed to be ubiquinone. Couples the redox reaction to proton translocation (for every two electrons transferred, four hydrogen ions are translocated across the cytoplasmic membrane), and thus conserves the redox energy in a proton gradient. The polypeptide is NADH-quinone oxidoreductase subunit B (Xanthobacter autotrophicus (strain ATCC BAA-1158 / Py2)).